Reading from the N-terminus, the 806-residue chain is MSNKTLPYCCEHGLKDEVIALLAKGEDVNQKDGSNRYPLHYAAIGGYIEIVAMLLERGALVNCSTPRGATPLHYASRGGRIECIQLLIDNKADVNCRDGAGSTPLHTALQCNETKCAIALIETFGADVNLKTAEGSTALHLASARGLVPVIVALLENGARADVRDSKENSPFQSLPINLTENEKKEKIENSISQDISKLFNINKNREFSGVGKKEDDDNNMKIDKQESEQQSTSDKLYSDITFLIENQKVYAHKCILQARCPNFMSSINNKIEQQQSQKPIEIKDYSFKLFLSFIEWIYTGSIEKFESTSKSIDLSFQFSILLMGEKFDCKGLVSYCREFIKESIGDSNVGSIWSIIKKLPTSTRSNLGNLVRDCLITMVRSWNIFTMTKTFSTDINKSDIIEIIKSLAPFITETPISEIKQTRTANANASNSNQSKTPAKRTSTTNTNNNIPQQNITSSNNTPQQNTSSSSSSSTTSSTPSKSSSSTPSKSTSTSSSSSSSSSSSSSSSSNYSDSMNEKNLTFCKGLINGMFKKKTSLAFQRPVDPLAEGIPDYFDVIKHPMDLGTIKGKLDNNGYSTIKDFAADVRLMFENALTYNADSSPVWKHAKTLLNAFDQKFLQNFPNEKPPTYKPPPPTPTPIPTQQQQQQSTSSTSTPTSEKKRKHDEHVKVKEDTNSAQPTSSSSNHTNGENASSSSSSSSSKQSNNNNNNNNNNNSNSTTNSSSSSSSTTTTQKKYSDEERRSLMERINELAPDDVQEVLNIIDPNAIKQADESLEIDMYQIDDKNLSQVESFINECFKKQKQDE.

ANK repeat units lie at residues 1-30 (MSNKTLPYCCEHGLKDEVIALLAKGEDVNQ), 34-63 (SNRYPLHYAAIGGYIEIVAMLLERGALVNC), 67-96 (RGATPLHYASRGGRIECIQLLIDNKADVNC), 100-130 (AGSTPLHTALQCNETKCAIALIETFGADVNL), and 134-163 (EGSTALHLASARGLVPVIVALLENGARADV). Basic and acidic residues predominate over residues 210–228 (GVGKKEDDDNNMKIDKQES). Residues 210 to 231 (GVGKKEDDDNNMKIDKQESEQQ) are disordered. A BTB domain is found at 239–307 (SDITFLIENQ…IYTGSIEKFE (69 aa)). Disordered regions lie at residues 423–517 (TRTA…SDSM) and 621–743 (QNFP…EERR). Composition is skewed to low complexity over residues 426-436 (ANANASNSNQS) and 443-511 (TSTT…SSSS). One can recognise a Bromo domain in the interval 516-622 (SMNEKNLTFC…NAFDQKFLQN (107 aa)). The span at 626–641 (EKPPTYKPPPPTPTPI) shows a compositional bias: pro residues. A compositionally biased stretch (low complexity) spans 642-658 (PTQQQQQQSTSSTSTPT). Over residues 666–675 (DEHVKVKEDT) the composition is skewed to basic and acidic residues. Over residues 676–693 (NSAQPTSSSSNHTNGENA) the composition is skewed to polar residues. The segment covering 694-733 (SSSSSSSSSKQSNNNNNNNNNNNSNSTTNSSSSSSSTTTT) has biased composition (low complexity). One can recognise an NET domain in the interval 727-806 (SSSTTTTQKK…ECFKKQKQDE (80 aa)).

This Dictyostelium discoideum (Social amoeba) protein is Ankyrin repeat, bromo and BTB domain-containing protein DDB_G0293800.